We begin with the raw amino-acid sequence, 144 residues long: UPF0735 ACT domain-containing protein LSEI_1046 (144 aa).

Positions 68-143 (VISLMLHHDR…GVSDVHLVSV (76 aa)) constitute an ACT domain.

Belongs to the UPF0735 family.

The polypeptide is UPF0735 ACT domain-containing protein LSEI_1046 (Lacticaseibacillus paracasei (strain ATCC 334 / BCRC 17002 / CCUG 31169 / CIP 107868 / KCTC 3260 / NRRL B-441) (Lactobacillus paracasei)).